A 173-amino-acid chain; its full sequence is Co-chaperone protein HscB homolog (173 aa).

The J domain maps to 5–77 (CHFALFELQP…PKRARYLLAM (73 aa)).

It belongs to the HscB family. In terms of assembly, interacts with HscA and stimulates its ATPase activity.

In terms of biological role, co-chaperone involved in the maturation of iron-sulfur cluster-containing proteins. Seems to help targeting proteins to be folded toward HscA. The sequence is that of Co-chaperone protein HscB homolog from Pseudomonas fluorescens (strain SBW25).